The chain runs to 59 residues: Large ribosomal subunit protein uL30 (59 aa).

It belongs to the universal ribosomal protein uL30 family. Part of the 50S ribosomal subunit.

This Sulfurihydrogenibium sp. (strain YO3AOP1) protein is Large ribosomal subunit protein uL30.